The sequence spans 441 residues: Ribulose bisphosphate carboxylase large chain (441 aa).

Lys-5 carries the N6,N6,N6-trimethyllysine modification. Positions 114 and 164 each coordinate substrate. Lys-166 serves as the catalytic Proton acceptor. A substrate-binding site is contributed by Lys-168. Mg(2+) contacts are provided by Lys-192, Asp-194, and Glu-195. Lys-192 carries the post-translational modification N6-carboxylysine. His-285 serves as the catalytic Proton acceptor. Positions 286, 318, and 370 each coordinate substrate.

It belongs to the RuBisCO large chain family. Type I subfamily. Heterohexadecamer of 8 large chains and 8 small chains; disulfide-linked. The disulfide link is formed within the large subunit homodimers. It depends on Mg(2+) as a cofactor. Post-translationally, the disulfide bond which can form in the large chain dimeric partners within the hexadecamer appears to be associated with oxidative stress and protein turnover.

The protein localises to the plastid. It is found in the chloroplast. The catalysed reaction is 2 (2R)-3-phosphoglycerate + 2 H(+) = D-ribulose 1,5-bisphosphate + CO2 + H2O. It catalyses the reaction D-ribulose 1,5-bisphosphate + O2 = 2-phosphoglycolate + (2R)-3-phosphoglycerate + 2 H(+). Functionally, ruBisCO catalyzes two reactions: the carboxylation of D-ribulose 1,5-bisphosphate, the primary event in carbon dioxide fixation, as well as the oxidative fragmentation of the pentose substrate in the photorespiration process. Both reactions occur simultaneously and in competition at the same active site. In Pellaea rotundifolia (Button fern), this protein is Ribulose bisphosphate carboxylase large chain.